The chain runs to 308 residues: Limonin dehydrogenase (308 aa).

This sequence belongs to the aldehyde dehydrogenase family.

The protein localises to the periplasm. With respect to regulation, completely inhibited by HgCl(2), CoCl(2) and CaCl(2). In terms of biological role, catalyzes the NAD(+)-dependent conversion of limonin. The sequence is that of Limonin dehydrogenase from Pseudomonas putida (Arthrobacter siderocapsulatus).